The sequence spans 295 residues: Mycothiol acetyltransferase (295 aa).

1D-myo-inositol 2-(L-cysteinylamino)-2-deoxy-alpha-D-glucopyranoside is bound at residue Glu-30. Residue 62-64 (LVV) participates in acetyl-CoA binding. The 159-residue stretch at 137-295 (VTVRAFRADS…DDDTHVQYRR (159 aa)) folds into the N-acetyltransferase domain. 1D-myo-inositol 2-(L-cysteinylamino)-2-deoxy-alpha-D-glucopyranoside is bound by residues Glu-165, Lys-209, and Glu-227. Residues 231–233 (VGI) and 238–244 (QGRGLGK) contribute to the acetyl-CoA site. Residue Tyr-265 participates in 1D-myo-inositol 2-(L-cysteinylamino)-2-deoxy-alpha-D-glucopyranoside binding.

The protein belongs to the acetyltransferase family. MshD subfamily. Monomer.

It catalyses the reaction 1D-myo-inositol 2-(L-cysteinylamino)-2-deoxy-alpha-D-glucopyranoside + acetyl-CoA = mycothiol + CoA + H(+). In terms of biological role, catalyzes the transfer of acetyl from acetyl-CoA to desacetylmycothiol (Cys-GlcN-Ins) to form mycothiol. In Nocardioides sp. (strain ATCC BAA-499 / JS614), this protein is Mycothiol acetyltransferase.